The following is a 1192-amino-acid chain: DNA topoisomerase 2 (1192 aa).

ATP contacts are provided by residues Asn-64, Asn-95, and 142 to 149 (GTNGVGLK). Mg(2+)-binding residues include Glu-438, Asp-539, and Asp-541. The Topo IIA-type catalytic domain occupies 707-1174 (IPNFLDGMTR…PGASVWLEEI (468 aa)). Tyr-800 serves as the catalytic O-(5'-phospho-DNA)-tyrosine intermediate.

It belongs to the type II topoisomerase family. Mg(2+) is required as a cofactor. It depends on Mn(2+) as a cofactor. Ca(2+) serves as cofactor.

The protein resides in the host cytoplasm. The enzyme catalyses ATP-dependent breakage, passage and rejoining of double-stranded DNA.. In terms of biological role, type II topoisomerase. Processively relaxes supercoiled DNA. Displays DNA-supercoiling activity only when associated with the viral histone-like protein. The protein is DNA topoisomerase 2 of African swine fever virus (isolate Tick/South Africa/Pretoriuskop Pr4/1996) (ASFV).